Here is a 393-residue protein sequence, read N- to C-terminus: NAD(P)H-quinone oxidoreductase subunit H, chloroplastic (393 aa).

Belongs to the complex I 49 kDa subunit family. As to quaternary structure, NDH is composed of at least 16 different subunits, 5 of which are encoded in the nucleus.

It is found in the plastid. It localises to the chloroplast thylakoid membrane. It catalyses the reaction a plastoquinone + NADH + (n+1) H(+)(in) = a plastoquinol + NAD(+) + n H(+)(out). The enzyme catalyses a plastoquinone + NADPH + (n+1) H(+)(in) = a plastoquinol + NADP(+) + n H(+)(out). Functionally, NDH shuttles electrons from NAD(P)H:plastoquinone, via FMN and iron-sulfur (Fe-S) centers, to quinones in the photosynthetic chain and possibly in a chloroplast respiratory chain. The immediate electron acceptor for the enzyme in this species is believed to be plastoquinone. Couples the redox reaction to proton translocation, and thus conserves the redox energy in a proton gradient. This is NAD(P)H-quinone oxidoreductase subunit H, chloroplastic from Daucus carota (Wild carrot).